A 222-amino-acid polypeptide reads, in one-letter code: Glutathione S-transferase A6 (222 aa).

Residues 3–83 (EKPLFHYDEA…YFSSKYNLYG (81 aa)) form the GST N-terminal domain. Glutathione contacts are provided by residues Tyr9, Arg45, 54-55 (QV), and 67-68 (QT). A GST C-terminal domain is found at 85 to 208 (DMKERALIDM…QPGSQRQPPV (124 aa)).

This sequence belongs to the GST superfamily. Alpha family. Homodimer or heterodimer of GSTA1 and GSTA2.

It is found in the cytoplasm. It carries out the reaction RX + glutathione = an S-substituted glutathione + a halide anion + H(+). Functionally, conjugation of reduced glutathione to a wide number of exogenous and endogenous hydrophobic electrophiles. The protein is Glutathione S-transferase A6 (Gsta6) of Rattus norvegicus (Rat).